A 294-amino-acid chain; its full sequence is Protease HtpX (294 aa).

Helical transmembrane passes span 4–24 (IALF…VLSL) and 34–52 (GLLI…VSLM). His-139 lines the Zn(2+) pocket. Glu-140 is a catalytic residue. His-143 contributes to the Zn(2+) binding site. 2 helical membrane passes run 158–178 (VVNT…AGFL) and 194–214 (LIYF…ASII). Glu-223 is a Zn(2+) binding site.

This sequence belongs to the peptidase M48B family. Requires Zn(2+) as cofactor.

The protein localises to the cell inner membrane. This chain is Protease HtpX, found in Klebsiella pneumoniae subsp. pneumoniae (strain ATCC 700721 / MGH 78578).